Consider the following 97-residue polypeptide: UPF0390 protein CNBD1430 (97 aa).

Disordered regions lie at residues 1–57 (MAQG…INNS) and 75–97 (RNVG…GKSR). The span at 29 to 46 (GKREVAPKDRQRVLERSQ) shows a compositional bias: basic and acidic residues. Polar residues predominate over residues 48–57 (KQLSSKINNS).

It belongs to the UPF0390 family.

The chain is UPF0390 protein CNBD1430 from Cryptococcus neoformans var. neoformans serotype D (strain B-3501A) (Filobasidiella neoformans).